A 335-amino-acid chain; its full sequence is Capsular polysaccharide phosphotransferase WcwK (335 aa).

This sequence belongs to the stealth family.

In Streptococcus pneumoniae, this protein is Capsular polysaccharide phosphotransferase WcwK (wcwK).